A 980-amino-acid chain; its full sequence is GPI inositol-deacylase (980 aa).

The Cytoplasmic portion of the chain corresponds to 1–7 (MFMFRNC). Residues 8–28 (AVLLVIGSICCFIYGLFRLHV) form a helical membrane-spanning segment. Over 29 to 628 (EVEPNACRMT…EYSYSSALSR (600 aa)) the chain is Lumenal. Residue S170 is part of the active site. N-linked (GlcNAc...) asparagine glycosylation is found at N427, N517, and N596. The chain crosses the membrane as a helical span at residues 629 to 649 (LVLEFYGWLPAHLVCVLLIVL). The Cytoplasmic portion of the chain corresponds to 650-709 (RKQVETFYDVGTFRSLRPYVGYLQYTSLYIVTACRLLKKLIISSRVFPEPEPLDYSINVS). Residues 710–730 (IVIHCAAIALSLLATLGTWLA) form a helical membrane-spanning segment. At 731-774 (LTLYGNAFYRLALRITRLSQATSNVMISIMTHLPITYGILTIAT) the chain is on the lumenal side. The helical transmembrane segment at 775 to 795 (AMGTCSGVGLLLAFVFYFLML) threads the bilayer. The Cytoplasmic segment spans residues 796–867 (SNAYKDYLED…CVGLQNFSFH (72 aa)). Positions 821-853 (AVTEQEDATEEQNEEQNALKQNDEQKQQQQEEE) are disordered. Acidic residues predominate over residues 824–834 (EQEDATEEQNE). Residues 868–888 (VTLLLMLFVQLLLNAPSSLAW) form a helical membrane-spanning segment. Topologically, residues 889-895 (LRSRRHG) are lumenal. Residues 896–916 (INLPDPSLYPSIVVLASLSLL) traverse the membrane as a helical segment. The Cytoplasmic portion of the chain corresponds to 917 to 929 (LQLRAPQKCQGYW). A helical membrane pass occupies residues 930 to 950 (MLSIAFYILAGVVLLYCQAAI). Topologically, residues 951–954 (YRLT) are lumenal. The chain crosses the membrane as a helical span at residues 955 to 975 (YVIAGAFALLSAHQSLWILWG). The Cytoplasmic segment spans residues 976-980 (RVSRV).

Belongs to the GPI inositol-deacylase family.

Its subcellular location is the endoplasmic reticulum membrane. Involved in inositol deacylation of GPI-anchored proteins. This Drosophila melanogaster (Fruit fly) protein is GPI inositol-deacylase.